Here is a 272-residue protein sequence, read N- to C-terminus: Regulatory factor X-associated protein (272 aa).

3 disordered regions span residues 1 to 20, 74 to 142, and 175 to 195; these read MEAQGVAEGAGPGAASGVPH, LCEG…KTCT, and KKKKSDQALNCGGTASTGSAG. Acidic residues predominate over residues 79–94; it reads GDGEEEAGEDEADLLD. The short motif at 163–178 is the Nuclear localization signal element; the sequence is KKHRNKMYKDKYKKKK. Residue lysine 198 forms a Glycyl lysine isopeptide (Lys-Gly) (interchain with G-Cter in SUMO2) linkage. A C-terminal domain region spans residues 214–270; the sequence is TGSFGDRPARPTLLEQVLNQKRLSLLRSPEVVQFLQKQQQLLNQQVLEQRQQQFPGT.

In terms of assembly, the RFX heterotetrameric complex consists of 2 molecules of RFX5 and one each of RFXAP and RFX-B/RFXANK; with each subunit representing a separate complementation group. RFX forms cooperative DNA binding complexes with X2BP and CBF/NF-Y. RFX associates with CIITA to form an active transcriptional complex. In terms of processing, phosphorylated. In terms of tissue distribution, ubiquitous.

It is found in the nucleus. Part of the RFX complex that binds to the X-box of MHC II promoters. The chain is Regulatory factor X-associated protein (RFXAP) from Homo sapiens (Human).